Reading from the N-terminus, the 86-residue chain is Cell division topological specificity factor (86 aa).

This sequence belongs to the MinE family.

Prevents the cell division inhibition by proteins MinC and MinD at internal division sites while permitting inhibition at polar sites. This ensures cell division at the proper site by restricting the formation of a division septum at the midpoint of the long axis of the cell. The protein is Cell division topological specificity factor of Shewanella woodyi (strain ATCC 51908 / MS32).